Reading from the N-terminus, the 356-residue chain is Sporulation minus regulator 1 (356 aa).

A DNA-binding region spans residues 183 to 199 (HPLRQLPGNPWHKFFGN).

It to N.crassa mta-2.

It is found in the nucleus. Its function is as follows. Transcriptional activator that is required for post-fertilization events. It is required for the developmental events that occur in the female organ after fertilization. The sequence is that of Sporulation minus regulator 1 (SMR1) from Podospora anserina (Pleurage anserina).